The chain runs to 176 residues: Large ribosomal subunit protein uL16 (176 aa).

This sequence belongs to the universal ribosomal protein uL16 family.

This is Large ribosomal subunit protein uL16 from Sulfolobus acidocaldarius (strain ATCC 33909 / DSM 639 / JCM 8929 / NBRC 15157 / NCIMB 11770).